Consider the following 231-residue polypeptide: Uracil-DNA glycosylase (231 aa).

The Proton acceptor role is filled by Asp-74.

The protein belongs to the uracil-DNA glycosylase (UDG) superfamily. UNG family.

It is found in the cytoplasm. The enzyme catalyses Hydrolyzes single-stranded DNA or mismatched double-stranded DNA and polynucleotides, releasing free uracil.. Excises uracil residues from the DNA which can arise as a result of misincorporation of dUMP residues by DNA polymerase or due to deamination of cytosine. This is Uracil-DNA glycosylase from Campylobacter jejuni subsp. jejuni serotype O:2 (strain ATCC 700819 / NCTC 11168).